The following is a 403-amino-acid chain: F-box/LRR-repeat protein At1g06630 (403 aa).

Residues 11–59 enclose the F-box domain; sequence RDAINWLPDEILGKILSLLATKQAVSTSVLSKKWRTLFKLVDTLEFDDS. LRR repeat units follow at residues 239 to 262 and 288 to 312; these read LPNL…NLES and IRNV…KYGL.

The polypeptide is F-box/LRR-repeat protein At1g06630 (Arabidopsis thaliana (Mouse-ear cress)).